A 247-amino-acid chain; its full sequence is 5'-nucleotidase SurE (247 aa).

The a divalent metal cation site is built by Asp8, Asp9, Ser39, and Asn91.

The protein belongs to the SurE nucleotidase family. It depends on a divalent metal cation as a cofactor.

Its subcellular location is the cytoplasm. It catalyses the reaction a ribonucleoside 5'-phosphate + H2O = a ribonucleoside + phosphate. Functionally, nucleotidase that shows phosphatase activity on nucleoside 5'-monophosphates. The sequence is that of 5'-nucleotidase SurE from Laribacter hongkongensis (strain HLHK9).